Consider the following 170-residue polypeptide: Putative phosphoesterase OB1230 (170 aa).

Catalysis depends on H34, which acts as the Proton donor. 2 short sequence motifs (HXTX) span residues 34-37 and 115-118; these read HLTL and HITI. H115 serves as the catalytic Proton acceptor.

This sequence belongs to the 2H phosphoesterase superfamily. YjcG family.

This is Putative phosphoesterase OB1230 from Oceanobacillus iheyensis (strain DSM 14371 / CIP 107618 / JCM 11309 / KCTC 3954 / HTE831).